The primary structure comprises 267 residues: 4-hydroxy-tetrahydrodipicolinate reductase (267 aa).

Residues glycine 8 to methionine 13 and glutamate 34 each bind NAD(+). An NADP(+)-binding site is contributed by arginine 35. Residues glycine 98–threonine 100 and alanine 122–methionine 125 each bind NAD(+). The active-site Proton donor/acceptor is histidine 155. Histidine 156 contributes to the (S)-2,3,4,5-tetrahydrodipicolinate binding site. Lysine 159 functions as the Proton donor in the catalytic mechanism. Glycine 165–threonine 166 is a (S)-2,3,4,5-tetrahydrodipicolinate binding site.

The protein belongs to the DapB family.

The protein localises to the cytoplasm. The catalysed reaction is (S)-2,3,4,5-tetrahydrodipicolinate + NAD(+) + H2O = (2S,4S)-4-hydroxy-2,3,4,5-tetrahydrodipicolinate + NADH + H(+). It catalyses the reaction (S)-2,3,4,5-tetrahydrodipicolinate + NADP(+) + H2O = (2S,4S)-4-hydroxy-2,3,4,5-tetrahydrodipicolinate + NADPH + H(+). It participates in amino-acid biosynthesis; L-lysine biosynthesis via DAP pathway; (S)-tetrahydrodipicolinate from L-aspartate: step 4/4. Functionally, catalyzes the conversion of 4-hydroxy-tetrahydrodipicolinate (HTPA) to tetrahydrodipicolinate. The sequence is that of 4-hydroxy-tetrahydrodipicolinate reductase from Pelobacter propionicus (strain DSM 2379 / NBRC 103807 / OttBd1).